The chain runs to 531 residues: Beta-hexosaminidase subunit beta (531 aa).

Positions 1-24 (MRHRGLGLAALLALLAAVAPRSSA) are cleaved as a signal peptide. N-linked (GlcNAc...) asparagine glycosylation is present at N50. Cysteines 65 and 111 form a disulfide. 3 N-linked (GlcNAc...) asparagine glycosylation sites follow: N116, N164, and N301. 2 disulfide bridges follow: C283-C334 and C508-C525. The active-site Proton donor is the E329.

The protein belongs to the glycosyl hydrolase 20 family. There are 3 forms of beta-hexosaminidase: hexosaminidase A is a heterodimer composed of one subunit alpha and one subunit beta (chain A and B); hexosaminidase B is a homodimer of two beta subunits (two chains A and B); hexosaminidase S is a homodimer of two alpha subunits. The composition of the dimer (isozyme A versus isozyme S) has a significant effect on the substrate specificity of the alpha subunit active site.

The protein resides in the lysosome. Its subcellular location is the cytoplasmic vesicle. It is found in the secretory vesicle. The protein localises to the cortical granule. The enzyme catalyses Hydrolysis of terminal non-reducing N-acetyl-D-hexosamine residues in N-acetyl-beta-D-hexosaminides.. It carries out the reaction N-acetyl-beta-D-galactosaminyl-(1-&gt;4)-beta-D-3-sulfogalactosyl-(1-&gt;4)-beta-D-glucosyl-(1&lt;-&gt;1')-ceramide + H2O = a beta-D-3-sulfogalactosyl-(1-&gt;4)-beta-D-glucosyl-(1&lt;-&gt;1')-ceramide + N-acetyl-beta-D-galactosamine. The catalysed reaction is a ganglioside GM2 (d18:1(4E)) + H2O = a ganglioside GM3 (d18:1(4E)) + N-acetyl-beta-D-galactosamine. It catalyses the reaction a ganglioside GM2 + H2O = a ganglioside GM3 + N-acetyl-beta-D-galactosamine. The enzyme catalyses beta-D-GalNAc-(1-&gt;4)-alpha-L-IdoA-(1-&gt;3)-beta-D-GalNAc-4-sulfate-(1-&gt;4)-alpha-L-IdoA-(1-&gt;3)-D-GalNAc-4-sulfate + H2O = alpha-L-IdoA-(1-&gt;3)-beta-D-GalNAc-4-sulfate-(1-&gt;4)-alpha-L-IdoA-(1-&gt;3)-D-GalNAc-4-sulfate + N-acetyl-D-galactosamine. It carries out the reaction N-acetyl-beta-D-6-sulfogalactosaminyl-(1-&gt;4)-alpha-L-iduronyl-(1-&gt;3)-N-acetyl-D-6-sulfogalactosamine + H2O = alpha-L-iduronyl-(1-&gt;3)-N-acetyl-D-6-sulfogalactosamine + N-acetyl-D-6-sulfogalactosamine. With respect to regulation, addition of GM2A stimulates the hydrolysis of sulfated glycosphingolipid SM2 and the ganglioside GM2. In terms of biological role, hydrolyzes the non-reducing end N-acetyl-D-hexosamine and/or sulfated N-acetyl-D-hexosamine of glycoconjugates, such as the oligosaccharide moieties from proteins and neutral glycolipids, or from certain mucopolysaccharides. The isozyme B does not hydrolyze each of these substrates, however hydrolyzes efficiently neutral oligosaccharide. Only the isozyme A is responsible for the degradation of GM2 gangliosides in the presence of GM2A. During fertilization is responsible, at least in part, for the zona block to polyspermy. Present in the cortical granules of non-activated oocytes, is exocytosed during the cortical reaction in response to oocyte activation and inactivates the sperm galactosyltransferase-binding site, accounting for the block in sperm binding to the zona pellucida. This Felis catus (Cat) protein is Beta-hexosaminidase subunit beta.